A 142-amino-acid polypeptide reads, in one-letter code: Hemoglobin larval subunit alpha (142 aa).

In terms of domain architecture, Globin spans 2 to 142 (VLSAEEKALV…VSAVLTSKYR (141 aa)). O2 is bound at residue H59. H88 serves as a coordination point for heme b.

The protein belongs to the globin family. Heterotetramer of two alpha chains and two beta chains. Red blood cells.

Functionally, involved in oxygen transport from the lung to the various peripheral tissues. In Pleurodeles waltl (Iberian ribbed newt), this protein is Hemoglobin larval subunit alpha.